The following is a 231-amino-acid chain: Ion-translocating oxidoreductase complex subunit E (231 aa).

6 helical membrane-spanning segments follow: residues 18-38 (ALVQLLGLCPLLAVTSTATNA), 39-59 (LGLGLATTLVLTLTNLTISTL), 63-83 (TPAEIRIPIYVMIIASVVSAV), 86-106 (LINAYAFGLYQSLGIFIPLIV), 125-145 (ALSALDGFSIGMGATCAMCVL), and 182-202 (PFLLAMLPPGAFIGLGLMLAG).

It belongs to the NqrDE/RnfAE family. In terms of assembly, the complex is composed of six subunits: RsxA, RsxB, RsxC, RsxD, RsxE and RsxG.

Its subcellular location is the cell inner membrane. Functionally, part of a membrane-bound complex that couples electron transfer with translocation of ions across the membrane. Required to maintain the reduced state of SoxR. The polypeptide is Ion-translocating oxidoreductase complex subunit E (Escherichia coli (strain SMS-3-5 / SECEC)).